Here is a 508-residue protein sequence, read N- to C-terminus: DDB1- and CUL4-associated factor 10 (508 aa).

The tract at residues 1–75 is disordered; the sequence is MSSGHPSDNE…GSASGSGCRG (75 aa). A compositionally biased stretch (basic and acidic residues) spans 7-17; it reads SDNEEPRADLL. Over residues 18–32 the composition is skewed to acidic residues; sequence REEEEEEEEEEDSDE. Residues 63 to 75 show a composition bias toward gly residues; it reads GGTGSASGSGCRG. 4 WD repeats span residues 126-165, 169-207, 211-250, and 256-295; these read QTHG…HIKT, AHED…SKVC, GHAS…EDGC, and FHTR…QSLE. The segment at 307 to 343 is disordered; sequence PPLSTEGSSAGSRSGGPRHTIDNKNHPHREGLSPRNS. Residues 325–338 are compositionally biased toward basic and acidic residues; that stretch reads HTIDNKNHPHREGL. WD repeat units follow at residues 356 to 396, 419 to 457, and 475 to 508; these read DRGN…QEGA, VGRG…AELV, and SHSD…QPHF.

It belongs to the WD repeat DCAF10 family.

The protein operates within protein modification; protein ubiquitination. Its function is as follows. May function as a substrate receptor for CUL4-DDB1 E3 ubiquitin-protein ligase complex. The chain is DDB1- and CUL4-associated factor 10 (dcaf10) from Danio rerio (Zebrafish).